The following is a 210-amino-acid chain: Thiamine-phosphate synthase (210 aa).

Residues glutamine 38–lysine 42 and asparagine 70 each bind 4-amino-2-methyl-5-(diphosphooxymethyl)pyrimidine. Residues aspartate 71 and aspartate 90 each coordinate Mg(2+). Serine 109 is a binding site for 4-amino-2-methyl-5-(diphosphooxymethyl)pyrimidine. Threonine 139–threonine 141 provides a ligand contact to 2-[(2R,5Z)-2-carboxy-4-methylthiazol-5(2H)-ylidene]ethyl phosphate. Residue lysine 142 participates in 4-amino-2-methyl-5-(diphosphooxymethyl)pyrimidine binding. 2-[(2R,5Z)-2-carboxy-4-methylthiazol-5(2H)-ylidene]ethyl phosphate is bound by residues glycine 170 and valine 190 to serine 191.

The protein belongs to the thiamine-phosphate synthase family. The cofactor is Mg(2+).

It catalyses the reaction 2-[(2R,5Z)-2-carboxy-4-methylthiazol-5(2H)-ylidene]ethyl phosphate + 4-amino-2-methyl-5-(diphosphooxymethyl)pyrimidine + 2 H(+) = thiamine phosphate + CO2 + diphosphate. It carries out the reaction 2-(2-carboxy-4-methylthiazol-5-yl)ethyl phosphate + 4-amino-2-methyl-5-(diphosphooxymethyl)pyrimidine + 2 H(+) = thiamine phosphate + CO2 + diphosphate. The catalysed reaction is 4-methyl-5-(2-phosphooxyethyl)-thiazole + 4-amino-2-methyl-5-(diphosphooxymethyl)pyrimidine + H(+) = thiamine phosphate + diphosphate. It participates in cofactor biosynthesis; thiamine diphosphate biosynthesis; thiamine phosphate from 4-amino-2-methyl-5-diphosphomethylpyrimidine and 4-methyl-5-(2-phosphoethyl)-thiazole: step 1/1. Its function is as follows. Condenses 4-methyl-5-(beta-hydroxyethyl)thiazole monophosphate (THZ-P) and 2-methyl-4-amino-5-hydroxymethyl pyrimidine pyrophosphate (HMP-PP) to form thiamine monophosphate (TMP). This is Thiamine-phosphate synthase from Leptospira biflexa serovar Patoc (strain Patoc 1 / Ames).